The sequence spans 182 residues: Putative CTD phosphatase-like protein 355R (182 aa).

The FCP1 homology domain occupies 1-180 (MKNIFLDLDN…MRLKDVLNRH (180 aa)).

The protein belongs to the IIV-6 355R family.

Its function is as follows. May function as a phosphatase. This is Putative CTD phosphatase-like protein 355R from Invertebrate iridescent virus 6 (IIV-6).